Consider the following 118-residue polypeptide: Small ribosomal subunit protein uS13 (118 aa).

Positions 94–118 (SLPLRGQRTKTNARTRKGPRKPIRK) are disordered.

It belongs to the universal ribosomal protein uS13 family. Part of the 30S ribosomal subunit. Forms a loose heterodimer with protein S19. Forms two bridges to the 50S subunit in the 70S ribosome.

Functionally, located at the top of the head of the 30S subunit, it contacts several helices of the 16S rRNA. In the 70S ribosome it contacts the 23S rRNA (bridge B1a) and protein L5 of the 50S subunit (bridge B1b), connecting the 2 subunits; these bridges are implicated in subunit movement. Contacts the tRNAs in the A and P-sites. The protein is Small ribosomal subunit protein uS13 of Shewanella sediminis (strain HAW-EB3).